The sequence spans 142 residues: UPF0179 protein PH1477 (142 aa).

Belongs to the UPF0179 family.

The polypeptide is UPF0179 protein PH1477 (Pyrococcus horikoshii (strain ATCC 700860 / DSM 12428 / JCM 9974 / NBRC 100139 / OT-3)).